We begin with the raw amino-acid sequence, 339 residues long: Glycerol-3-phosphate dehydrogenase [NAD(P)+] (339 aa).

Residues serine 14, tyrosine 15, histidine 35, and lysine 109 each coordinate NADPH. Residues lysine 109, glycine 138, and threonine 140 each contribute to the sn-glycerol 3-phosphate site. Alanine 142 contacts NADPH. Sn-glycerol 3-phosphate is bound by residues lysine 194, aspartate 247, serine 257, arginine 258, and asparagine 259. The active-site Proton acceptor is the lysine 194. Arginine 258 contributes to the NADPH binding site. NADPH is bound by residues valine 282 and glutamate 284.

This sequence belongs to the NAD-dependent glycerol-3-phosphate dehydrogenase family.

The protein localises to the cytoplasm. The catalysed reaction is sn-glycerol 3-phosphate + NAD(+) = dihydroxyacetone phosphate + NADH + H(+). It carries out the reaction sn-glycerol 3-phosphate + NADP(+) = dihydroxyacetone phosphate + NADPH + H(+). It participates in membrane lipid metabolism; glycerophospholipid metabolism. Functionally, catalyzes the reduction of the glycolytic intermediate dihydroxyacetone phosphate (DHAP) to sn-glycerol 3-phosphate (G3P), the key precursor for phospholipid synthesis. The protein is Glycerol-3-phosphate dehydrogenase [NAD(P)+] of Shewanella pealeana (strain ATCC 700345 / ANG-SQ1).